Here is a 122-residue protein sequence, read N- to C-terminus: Large ribosomal subunit protein uL14 (122 aa).

This sequence belongs to the universal ribosomal protein uL14 family. As to quaternary structure, part of the 50S ribosomal subunit. Forms a cluster with proteins L3 and L19. In the 70S ribosome, L14 and L19 interact and together make contacts with the 16S rRNA in bridges B5 and B8.

In terms of biological role, binds to 23S rRNA. Forms part of two intersubunit bridges in the 70S ribosome. This Dehalococcoides mccartyi (strain ATCC BAA-2266 / KCTC 15142 / 195) (Dehalococcoides ethenogenes (strain 195)) protein is Large ribosomal subunit protein uL14.